A 100-amino-acid polypeptide reads, in one-letter code: Small ribosomal subunit protein uS14c (100 aa).

This sequence belongs to the universal ribosomal protein uS14 family. Part of the 30S ribosomal subunit.

The protein resides in the plastid. The protein localises to the chloroplast. Functionally, binds 16S rRNA, required for the assembly of 30S particles. The chain is Small ribosomal subunit protein uS14c from Cycas taitungensis (Prince sago).